Here is a 265-residue protein sequence, read N- to C-terminus: Glutamate racemase (265 aa).

Substrate is bound by residues 10–11 (DS) and 42–43 (YG). Residue C73 is the Proton donor/acceptor of the active site. Residue 74–75 (NT) participates in substrate binding. C183 serves as the catalytic Proton donor/acceptor. 184–185 (TH) provides a ligand contact to substrate.

Belongs to the aspartate/glutamate racemases family.

It catalyses the reaction L-glutamate = D-glutamate. Its pathway is cell wall biogenesis; peptidoglycan biosynthesis. Functionally, provides the (R)-glutamate required for cell wall biosynthesis. In Corynebacterium diphtheriae (strain ATCC 700971 / NCTC 13129 / Biotype gravis), this protein is Glutamate racemase.